An 843-amino-acid chain; its full sequence is Pullulanase (843 aa).

A signal peptide spans 1–19; the sequence is MKTKLWLLLVLLLSALIFS. The active-site Nucleophile is the Asp-535. Catalysis depends on Glu-564, which acts as the Proton donor.

It belongs to the glycosyl hydrolase 13 family.

The catalysed reaction is Hydrolysis of (1-&gt;6)-alpha-D-glucosidic linkages in pullulan, amylopectin and glycogen, and in the alpha- and beta-limit dextrins of amylopectin and glycogen.. This is Pullulanase (pulA) from Thermotoga maritima (strain ATCC 43589 / DSM 3109 / JCM 10099 / NBRC 100826 / MSB8).